A 344-amino-acid chain; its full sequence is Arginine N-succinyltransferase (344 aa).

Position 125 (L125) interacts with succinyl-CoA. Residue H229 is the Proton donor of the active site.

Belongs to the arginine N-succinyltransferase family.

It catalyses the reaction succinyl-CoA + L-arginine = N(2)-succinyl-L-arginine + CoA + H(+). It functions in the pathway amino-acid degradation; L-arginine degradation via AST pathway; L-glutamate and succinate from L-arginine: step 1/5. Functionally, catalyzes the transfer of succinyl-CoA to arginine to produce N(2)-succinylarginine. The chain is Arginine N-succinyltransferase from Citrobacter koseri (strain ATCC BAA-895 / CDC 4225-83 / SGSC4696).